The chain runs to 335 residues: Phosphate acyltransferase (335 aa).

The protein belongs to the PlsX family. In terms of assembly, homodimer. Probably interacts with PlsY.

It localises to the cytoplasm. The enzyme catalyses a fatty acyl-[ACP] + phosphate = an acyl phosphate + holo-[ACP]. The protein operates within lipid metabolism; phospholipid metabolism. Functionally, catalyzes the reversible formation of acyl-phosphate (acyl-PO(4)) from acyl-[acyl-carrier-protein] (acyl-ACP). This enzyme utilizes acyl-ACP as fatty acyl donor, but not acyl-CoA. The protein is Phosphate acyltransferase of Streptococcus equi subsp. equi (strain 4047).